Consider the following 101-residue polypeptide: uncharacterized protein (101 aa).

The segment at 76 to 101 is disordered; it reads KGNVTRRRKKTHLGNDDGKKEAQEKM. Positions 88–101 are enriched in basic and acidic residues; the sequence is LGNDDGKKEAQEKM.

This is an uncharacterized protein from Homo sapiens (Human).